Here is a 457-residue protein sequence, read N- to C-terminus: Multidrug resistance protein MdtK (457 aa).

12 helical membrane passes run 11-31 (LLAL…MGFV), 53-73 (IWLP…PVIA), 93-113 (WLAG…GYII), 127-147 (AVGY…FQVA), 160-180 (GMVI…IFIY), 188-208 (LGGV…FIAM), 243-263 (LPIA…ALLV), 276-296 (IALN…AAVT), 314-334 (AART…IFTV), 357-377 (LMLL…GSGI), 387-407 (IFFI…YILA), and 418-438 (PAGF…MMML).

It belongs to the multi antimicrobial extrusion (MATE) (TC 2.A.66.1) family. MdtK subfamily.

It localises to the cell inner membrane. Its function is as follows. Multidrug efflux pump that functions probably as a Na(+)/drug antiporter. The chain is Multidrug resistance protein MdtK from Citrobacter koseri (strain ATCC BAA-895 / CDC 4225-83 / SGSC4696).